A 177-amino-acid chain; its full sequence is Putative adenylate kinase (177 aa).

Residues G10, G12, K13, T14, and T15 each coordinate ATP. The NMP stretch occupies residues 30 to 50 (NLRDYALEKGIGEMKENELEI). The LID stretch occupies residues 99 to 109 (ERGYGREKLGE). ATP-binding residues include R100 and K138.

This sequence belongs to the adenylate kinase family. AK6 subfamily. As to quaternary structure, interacts with uS11. Not a structural component of 40S pre-ribosomes, but transiently interacts with them by binding to uS11.

It catalyses the reaction AMP + ATP = 2 ADP. The catalysed reaction is ATP + H2O = ADP + phosphate + H(+). Functionally, broad-specificity nucleoside monophosphate (NMP) kinase that catalyzes the reversible transfer of the terminal phosphate group between nucleoside triphosphates and monophosphates. Also has ATPase activity. Involved in the late maturation steps of the 30S ribosomal particles, specifically 16S rRNA maturation. While NMP activity is not required for ribosome maturation, ATPase activity is. Associates transiently with small ribosomal subunit protein uS11. ATP hydrolysis breaks the interaction with uS11. May temporarily remove uS11 from the ribosome to enable a conformational change of the ribosomal RNA that is needed for the final maturation step of the small ribosomal subunit. In Thermococcus kodakarensis (strain ATCC BAA-918 / JCM 12380 / KOD1) (Pyrococcus kodakaraensis (strain KOD1)), this protein is Putative adenylate kinase.